Here is a 396-residue protein sequence, read N- to C-terminus: 1-deoxy-D-xylulose 5-phosphate reductoisomerase (396 aa).

Thr13, Gly14, Ser15, Ile16, and Asn127 together coordinate NADPH. Lys128 provides a ligand contact to 1-deoxy-D-xylulose 5-phosphate. Position 129 (Glu129) interacts with NADPH. Asp153 is a binding site for Mn(2+). 1-deoxy-D-xylulose 5-phosphate is bound by residues Ser154, Glu155, Ser184, and His207. Position 155 (Glu155) interacts with Mn(2+). Gly213 contacts NADPH. 1-deoxy-D-xylulose 5-phosphate is bound by residues Ser220, Asn225, Lys226, and Glu229. Glu229 is a Mn(2+) binding site.

It belongs to the DXR family. The cofactor is Mg(2+). Mn(2+) serves as cofactor.

The enzyme catalyses 2-C-methyl-D-erythritol 4-phosphate + NADP(+) = 1-deoxy-D-xylulose 5-phosphate + NADPH + H(+). The protein operates within isoprenoid biosynthesis; isopentenyl diphosphate biosynthesis via DXP pathway; isopentenyl diphosphate from 1-deoxy-D-xylulose 5-phosphate: step 1/6. Functionally, catalyzes the NADPH-dependent rearrangement and reduction of 1-deoxy-D-xylulose-5-phosphate (DXP) to 2-C-methyl-D-erythritol 4-phosphate (MEP). This Pseudomonas syringae pv. tomato (strain ATCC BAA-871 / DC3000) protein is 1-deoxy-D-xylulose 5-phosphate reductoisomerase.